Consider the following 508-residue polypeptide: Maturase K (508 aa).

The protein belongs to the intron maturase 2 family. MatK subfamily.

It localises to the plastid. Its subcellular location is the chloroplast. In terms of biological role, usually encoded in the trnK tRNA gene intron. Probably assists in splicing its own and other chloroplast group II introns. The protein is Maturase K of Gordonia lasianthus (Loblolly bay).